The following is a 217-amino-acid chain: MDKFIVHTGVVAPLDRENVDTDAIIPKQFLKSIKRTGFGPNAFDEWRYLDHGEPGQDNSKRPLNPDFVLNQPRYQGASILLTRQNFGCGSSREHAPWALQQYGFRAIIAPSFADIFYNNCFKNGLLPIVLTEQQVDHLFNETFAFNGFQLTVDLEKQVVRTTDGGTEYPFEVAAFRKYCLLNGFDDIGLTLRHADKIRQYEAERIAKQPWLNNRLVR.

It belongs to the LeuD family. LeuD type 1 subfamily. As to quaternary structure, heterodimer of LeuC and LeuD.

The catalysed reaction is (2R,3S)-3-isopropylmalate = (2S)-2-isopropylmalate. It participates in amino-acid biosynthesis; L-leucine biosynthesis; L-leucine from 3-methyl-2-oxobutanoate: step 2/4. Catalyzes the isomerization between 2-isopropylmalate and 3-isopropylmalate, via the formation of 2-isopropylmaleate. This Paraburkholderia phymatum (strain DSM 17167 / CIP 108236 / LMG 21445 / STM815) (Burkholderia phymatum) protein is 3-isopropylmalate dehydratase small subunit.